The chain runs to 468 residues: uncharacterized protein (468 aa).

The signal sequence occupies residues 1-27 (MRKWYFILLAGVLTSVILAFVYDKTKA). 8 PbH1 repeats span residues 125 to 154 (KHDIAISGLTIQDLSVSSEEATAIGIYVSG), 156 to 185 (SSHIAIKDNHIRGIKTTADEGNAHGIAVYG), 189 to 214 (MKDIRIEDNTVEKLTLGASEAVVLNG), 216 to 238 (IDGFTVAGNVVRNNNNIGIDLIG), 249 to 283 (VRNGVVENNTVYQNSTYGNPAYGDEYSAGGIYVDG), 284 to 305 (GHDIEIKNNTVYDNDIGIEATS), 312 to 334 (ANAIQITDNKVYNNAYTGISIGG), and 397 to 420 (NEGNTVNHNVYHKEADQDGIWMWK).

The protein resides in the secreted. This is an uncharacterized protein from Bacillus subtilis (strain 168).